We begin with the raw amino-acid sequence, 705 residues long: Dynein axonemal intermediate chain 1 (705 aa).

Disordered regions lie at residues 1 to 44 (MPSK…AVRP) and 122 to 169 (AGSQ…DVPA). Ser-124 and Ser-127 each carry phosphoserine. Over residues 124 to 135 (SQESVKVVTSDT) the composition is skewed to polar residues. Acidic residues predominate over residues 136–159 (EILEEEEEPKEGEGEGEGEAEGEA). WD repeat units follow at residues 386 to 426 (SSES…SQPC), 435 to 478 (KHTD…LVHI), 543 to 583 (AHNM…PMFI), 585 to 625 (DLNA…YEAI), and 633 to 672 (KKKN…RKMP).

This sequence belongs to the dynein intermediate chain family. In terms of assembly, consists of at least two heavy chains and a number of intermediate and light chains. Interacts with BICD2. Interacts with CFAP45 and CFAP52. Interacts with CFAP53.

Its subcellular location is the cytoplasm. The protein localises to the cytoskeleton. It is found in the cilium axoneme. In terms of biological role, part of the dynein complex of respiratory cilia. The sequence is that of Dynein axonemal intermediate chain 1 (Dnai1) from Rattus norvegicus (Rat).